The following is a 318-amino-acid chain: Glycine--tRNA ligase alpha subunit (318 aa).

It belongs to the class-II aminoacyl-tRNA synthetase family. In terms of assembly, tetramer of two alpha and two beta subunits.

The protein resides in the cytoplasm. It carries out the reaction tRNA(Gly) + glycine + ATP = glycyl-tRNA(Gly) + AMP + diphosphate. The polypeptide is Glycine--tRNA ligase alpha subunit (Saccharophagus degradans (strain 2-40 / ATCC 43961 / DSM 17024)).